We begin with the raw amino-acid sequence, 273 residues long: Pre-mRNA-splicing factor CWC23 (273 aa).

Residues Asp-15 to Leu-87 enclose the J domain.

This sequence belongs to the DnaJ family. Associated with the spliceosome.

Its subcellular location is the cytoplasm. It is found in the nucleus. In terms of biological role, involved in pre-mRNA splicing. May be involved in endoplasmic reticulum-associated protein degradation (ERAD) and required for growth at low and high temperatures. This Eremothecium gossypii (strain ATCC 10895 / CBS 109.51 / FGSC 9923 / NRRL Y-1056) (Yeast) protein is Pre-mRNA-splicing factor CWC23 (CWC23).